Consider the following 145-residue polypeptide: Toxin Res (145 aa).

It belongs to the MbcT/ParT/Res family. Homodimer. Forms a complex with cognate antitoxin Xre; the 2 toxin molecules dimerize and each contacts an Xre homodimer. Most Res-Xre contacts are between the antitoxin molecule closest to the toxin.

Functionally, toxic component of a type II toxin-antitoxin (TA) system. Expression in E.coli inhibits cell growth. In vivo it is probably neutralized by cognate antitoxin Xre; this has not been shown upon expression in E.coli. Probably depletes intracellular NAD(+). The polypeptide is Toxin Res (Pseudomonas putida (strain ATCC 47054 / DSM 6125 / CFBP 8728 / NCIMB 11950 / KT2440)).